A 260-amino-acid polypeptide reads, in one-letter code: Indole-3-glycerol phosphate synthase (260 aa).

The protein belongs to the TrpC family.

The catalysed reaction is 1-(2-carboxyphenylamino)-1-deoxy-D-ribulose 5-phosphate + H(+) = (1S,2R)-1-C-(indol-3-yl)glycerol 3-phosphate + CO2 + H2O. It participates in amino-acid biosynthesis; L-tryptophan biosynthesis; L-tryptophan from chorismate: step 4/5. The chain is Indole-3-glycerol phosphate synthase from Staphylococcus saprophyticus subsp. saprophyticus (strain ATCC 15305 / DSM 20229 / NCIMB 8711 / NCTC 7292 / S-41).